We begin with the raw amino-acid sequence, 324 residues long: MKPSVILYKALPDDLLQRLQEHFTVHQVANLSPQTVEQNAAIFAEAEGLLGSNENVDAALLEKMPKLHATSTISVGYDNFDVDALTARKILLMHTPTVLTETVADTLMALVLSTARRVVEVAERVKAGEWTASIGPDWYGTDVHHKTLGIVGMGRIGMALAQRAHFGFNMPILYNARRHHKEAEERFNARYCDLDTLLQESDFVCLILPLTDETHHLFGAEQFAKMKSSAIFINAGRGPVVDENALIAALQKGEIHAAGLDVFEQEPLSVDSPLLSMANVVAVPHIGSATHETRYGMAACAVDNLIDALQGKVEKNCVNPHVAD.

Active-site residues include R237 and E266. Catalysis depends on H285, which acts as the Proton donor.

The protein belongs to the D-isomer specific 2-hydroxyacid dehydrogenase family. GhrB subfamily. As to quaternary structure, homodimer.

It localises to the cytoplasm. The enzyme catalyses glycolate + NADP(+) = glyoxylate + NADPH + H(+). It catalyses the reaction (R)-glycerate + NAD(+) = 3-hydroxypyruvate + NADH + H(+). It carries out the reaction (R)-glycerate + NADP(+) = 3-hydroxypyruvate + NADPH + H(+). In terms of biological role, catalyzes the NADPH-dependent reduction of glyoxylate and hydroxypyruvate into glycolate and glycerate, respectively. The protein is Glyoxylate/hydroxypyruvate reductase B of Shigella sonnei (strain Ss046).